Reading from the N-terminus, the 335-residue chain is Tetraacyldisaccharide 4'-kinase (335 aa).

59 to 66 (TAGGNGKT) lines the ATP pocket.

The protein belongs to the LpxK family.

It carries out the reaction a lipid A disaccharide + ATP = a lipid IVA + ADP + H(+). Its pathway is glycolipid biosynthesis; lipid IV(A) biosynthesis; lipid IV(A) from (3R)-3-hydroxytetradecanoyl-[acyl-carrier-protein] and UDP-N-acetyl-alpha-D-glucosamine: step 6/6. Its function is as follows. Transfers the gamma-phosphate of ATP to the 4'-position of a tetraacyldisaccharide 1-phosphate intermediate (termed DS-1-P) to form tetraacyldisaccharide 1,4'-bis-phosphate (lipid IVA). This chain is Tetraacyldisaccharide 4'-kinase, found in Aliivibrio salmonicida (strain LFI1238) (Vibrio salmonicida (strain LFI1238)).